A 163-amino-acid chain; its full sequence is Biotin carboxyl carrier protein of acetyl-CoA carboxylase (163 aa).

The region spanning 85-161 (GDFIVSPLVG…QFGSKLFRIV (77 aa)) is the Biotinyl-binding domain. K127 is subject to N6-biotinyllysine.

In terms of assembly, homodimer.

Its pathway is lipid metabolism; fatty acid biosynthesis. This protein is a component of the acetyl coenzyme A carboxylase complex; first, biotin carboxylase catalyzes the carboxylation of the carrier protein and then the transcarboxylase transfers the carboxyl group to form malonyl-CoA. The protein is Biotin carboxyl carrier protein of acetyl-CoA carboxylase (accB) of Chlamydia muridarum (strain MoPn / Nigg).